The following is a 431-amino-acid chain: O-methyltransferase xanE (431 aa).

Aspartate 283 provides a ligand contact to S-adenosyl-L-methionine. Histidine 330 acts as the Proton acceptor in catalysis.

It belongs to the class I-like SAM-binding methyltransferase superfamily. Cation-independent O-methyltransferase family.

Its pathway is secondary metabolite biosynthesis. Its function is as follows. O-methyltransferase; part of the gene cluster that mediates the biosynthesis of the isocyanide xanthocillin and its derivatives. The first step of the pathway consists in the conversion of tyrosine into a vinyl-isonitrile intermediate by the isocyanide synthase xanB. Subsequent oxidative dimerization of this intermediate to form xanthocillin may involve the cytochrome P450 monooxygenase xanG, whose expression is coregulated with that of XanB. Xanthocillin can be further modified by the isonitrile hydratase-like protein xanA which introduces N-formyl groups and the methyltransferase xanE which introduces methyl groups, leading to the production of several derivatives including fumiformamide. Finally, fumiformamide can be subject to both oxidative and reductive cyclization to yield melanocins E and F, respectively. The protein is O-methyltransferase xanE of Aspergillus fumigatus (strain ATCC MYA-4609 / CBS 101355 / FGSC A1100 / Af293) (Neosartorya fumigata).